The sequence spans 1056 residues: Carbamoyl phosphate synthase large chain (1056 aa).

Residues 1–397 (MPKKSHIKKV…AFKKALRSLD (397 aa)) are carboxyphosphate synthetic domain. ATP contacts are provided by R127, R167, G173, G174, E206, V208, E213, G239, I240, H241, Q282, and E294. Residues 131 to 323 (RDLMNAIGEP…IARVAAKIAI (193 aa)) enclose the ATP-grasp 1 domain. Positions 282, 294, and 296 each coordinate Mg(2+). Q282, E294, and N296 together coordinate Mn(2+). The interval 398 to 530 (NDMQQHTNPS…YSTWEEGCEL (133 aa)) is oligomerization domain. The carbamoyl phosphate synthetic domain stretch occupies residues 531-920 (VRDSAKKVLI…YKACTAADNT (390 aa)). Positions 662–853 (SRLLTRLEIP…LAKIAAKVMV (192 aa)) constitute an ATP-grasp 2 domain. ATP is bound by residues R698, S737, L739, E744, G769, V770, H771, S772, Q812, and E824. 3 residues coordinate Mg(2+): Q812, E824, and N826. The Mn(2+) site is built by Q812, E824, and N826. One can recognise an MGS-like domain in the interval 919 to 1056 (NTLPTTGNVF…EPLGHYHGLM (138 aa)). The interval 921 to 1056 (LPTTGNVFIS…EPLGHYHGLM (136 aa)) is allosteric domain.

It belongs to the CarB family. As to quaternary structure, composed of two chains; the small (or glutamine) chain promotes the hydrolysis of glutamine to ammonia, which is used by the large (or ammonia) chain to synthesize carbamoyl phosphate. Tetramer of heterodimers (alpha,beta)4. The cofactor is Mg(2+). Requires Mn(2+) as cofactor.

The catalysed reaction is hydrogencarbonate + L-glutamine + 2 ATP + H2O = carbamoyl phosphate + L-glutamate + 2 ADP + phosphate + 2 H(+). The enzyme catalyses hydrogencarbonate + NH4(+) + 2 ATP = carbamoyl phosphate + 2 ADP + phosphate + 2 H(+). It functions in the pathway amino-acid biosynthesis; L-arginine biosynthesis; carbamoyl phosphate from bicarbonate: step 1/1. The protein operates within pyrimidine metabolism; UMP biosynthesis via de novo pathway; (S)-dihydroorotate from bicarbonate: step 1/3. Large subunit of the glutamine-dependent carbamoyl phosphate synthetase (CPSase). CPSase catalyzes the formation of carbamoyl phosphate from the ammonia moiety of glutamine, carbonate, and phosphate donated by ATP, constituting the first step of 2 biosynthetic pathways, one leading to arginine and/or urea and the other to pyrimidine nucleotides. The large subunit (synthetase) binds the substrates ammonia (free or transferred from glutamine from the small subunit), hydrogencarbonate and ATP and carries out an ATP-coupled ligase reaction, activating hydrogencarbonate by forming carboxy phosphate which reacts with ammonia to form carbamoyl phosphate. In Methanoculleus marisnigri (strain ATCC 35101 / DSM 1498 / JR1), this protein is Carbamoyl phosphate synthase large chain.